We begin with the raw amino-acid sequence, 481 residues long: Endoplasmic reticulum lectin 1 (481 aa).

Positions 1 to 27 are cleaved as a signal peptide; sequence MRRSDRLRCAGASLLVVLCGVFRSSFG. MRH domains follow at residues 108–245 and 340–467; these read SSCS…LCNH and SYCF…ICKI. 6 disulfide bridges follow: cysteine 110-cysteine 123, cysteine 198-cysteine 231, cysteine 214-cysteine 243, cysteine 342-cysteine 355, cysteine 419-cysteine 453, and cysteine 434-cysteine 465.

It localises to the endoplasmic reticulum lumen. In terms of biological role, probable lectin that binds selectively to improperly folded lumenal proteins. May function in endoplasmic reticulum quality control and endoplasmic reticulum-associated degradation (ERAD) of both non-glycosylated proteins and glycoproteins. In Xenopus tropicalis (Western clawed frog), this protein is Endoplasmic reticulum lectin 1 (erlec1).